The sequence spans 61 residues: Large ribosomal subunit protein bL33 (61 aa).

The protein belongs to the bacterial ribosomal protein bL33 family.

In Amoebophilus asiaticus (strain 5a2), this protein is Large ribosomal subunit protein bL33.